Reading from the N-terminus, the 337-residue chain is Ribosomal RNA small subunit methyltransferase H (337 aa).

S-adenosyl-L-methionine-binding positions include 45 to 47, D64, F91, D120, and Q127; that span reads GGH.

This sequence belongs to the methyltransferase superfamily. RsmH family.

The protein localises to the cytoplasm. The catalysed reaction is cytidine(1402) in 16S rRNA + S-adenosyl-L-methionine = N(4)-methylcytidine(1402) in 16S rRNA + S-adenosyl-L-homocysteine + H(+). Functionally, specifically methylates the N4 position of cytidine in position 1402 (C1402) of 16S rRNA. The polypeptide is Ribosomal RNA small subunit methyltransferase H (Corynebacterium glutamicum (strain ATCC 13032 / DSM 20300 / JCM 1318 / BCRC 11384 / CCUG 27702 / LMG 3730 / NBRC 12168 / NCIMB 10025 / NRRL B-2784 / 534)).